The following is a 792-amino-acid chain: Phenylalanine--tRNA ligase beta subunit (792 aa).

Positions 39 to 147 constitute a tRNA-binding domain; sequence GESLGQVVVA…DDAPVGQALA (109 aa). In terms of domain architecture, B5 spans 400–475; it reads PQPARILLRR…RIHGYDRVPT (76 aa). Mg(2+) is bound by residues aspartate 453, aspartate 459, glutamate 462, and aspartate 463. One can recognise an FDX-ACB domain in the interval 698-791; sequence SRFPSVRRDL…IEREHRARIR (94 aa).

The protein belongs to the phenylalanyl-tRNA synthetase beta subunit family. Type 1 subfamily. As to quaternary structure, tetramer of two alpha and two beta subunits. Mg(2+) is required as a cofactor.

It is found in the cytoplasm. The catalysed reaction is tRNA(Phe) + L-phenylalanine + ATP = L-phenylalanyl-tRNA(Phe) + AMP + diphosphate + H(+). The chain is Phenylalanine--tRNA ligase beta subunit from Xanthomonas oryzae pv. oryzae (strain KACC10331 / KXO85).